The primary structure comprises 231 residues: Ion-translocating oxidoreductase complex subunit E (231 aa).

6 consecutive transmembrane segments (helical) span residues Ala18–Ala38, Leu39–Leu59, Thr63–Val83, Leu86–Val106, Ala125–Leu145, and Pro182–Gly202.

It belongs to the NqrDE/RnfAE family. The complex is composed of six subunits: RsxA, RsxB, RsxC, RsxD, RsxE and RsxG.

The protein localises to the cell inner membrane. Part of a membrane-bound complex that couples electron transfer with translocation of ions across the membrane. Required to maintain the reduced state of SoxR. This is Ion-translocating oxidoreductase complex subunit E from Escherichia coli O6:H1 (strain CFT073 / ATCC 700928 / UPEC).